A 722-amino-acid chain; its full sequence is Probable cation-transporting ATPase HI_0290 (722 aa).

In terms of domain architecture, HMA spans 9–75 (KKISIQIGGM…IIHKTGFSAH (67 aa)). A metal cation is bound by residues C20 and C23. The next 6 helical transmembrane spans lie at 94 to 114 (LIVLWIINIPFLIGMLGMIGG), 118 to 138 (LMLPPIWQFALASIVQLWLAI), 157 to 177 (VLVSTGTLTIYLYSAFMLFYH), 180 to 200 (HAMGHVYFEASVMVIGFVSLG), 340 to 360 (VFVPVVLVISLVTFALTYILT), and 373 to 393 (VLVIACPCALGLATPAAIMVG). Residue D422 is the 4-aspartylphosphate intermediate of the active site. 4 helical membrane passes run 523 to 543 (IWQIASIVAVSINDEPIGAFA), 608 to 628 (LGHIVAMVGDGINDAPALASA), 675 to 695 (LFFALIYNILGIPLAAFGFLS), and 697 to 717 (IIAGAAMALSSISVLMNALRL). Mg(2+) is bound by residues D617 and D621.

It belongs to the cation transport ATPase (P-type) (TC 3.A.3) family. Type IB subfamily.

The protein localises to the cell membrane. It catalyses the reaction ATP + H2O = ADP + phosphate + H(+). The polypeptide is Probable cation-transporting ATPase HI_0290 (Haemophilus influenzae (strain ATCC 51907 / DSM 11121 / KW20 / Rd)).